The primary structure comprises 258 residues: Methionine aminopeptidase (258 aa).

A substrate-binding site is contributed by H84. 3 residues coordinate a divalent metal cation: D102, D113, and H176. Substrate is bound at residue H183. A divalent metal cation contacts are provided by E211 and E242.

Belongs to the peptidase M24A family. Methionine aminopeptidase type 1 subfamily. As to quaternary structure, monomer. It depends on Co(2+) as a cofactor. Zn(2+) serves as cofactor. The cofactor is Mn(2+). Fe(2+) is required as a cofactor.

The enzyme catalyses Release of N-terminal amino acids, preferentially methionine, from peptides and arylamides.. In terms of biological role, removes the N-terminal methionine from nascent proteins. The N-terminal methionine is often cleaved when the second residue in the primary sequence is small and uncharged (Met-Ala-, Cys, Gly, Pro, Ser, Thr, or Val). Requires deformylation of the N(alpha)-formylated initiator methionine before it can be hydrolyzed. The sequence is that of Methionine aminopeptidase from Aquifex aeolicus (strain VF5).